Consider the following 320-residue polypeptide: Cytochrome f (320 aa).

A signal peptide spans 1–35 (MQNRNTFSWVKEQMTRFISVSIMIYVITRTSIANA). Residues tyrosine 36, cysteine 56, cysteine 59, and histidine 60 each contribute to the heme site. A helical membrane pass occupies residues 286 to 306 (VQGLLFFLASVILAQIFLVLK).

Belongs to the cytochrome f family. In terms of assembly, the 4 large subunits of the cytochrome b6-f complex are cytochrome b6, subunit IV (17 kDa polypeptide, petD), cytochrome f and the Rieske protein, while the 4 small subunits are PetG, PetL, PetM and PetN. The complex functions as a dimer. It depends on heme as a cofactor.

The protein resides in the plastid. It is found in the chloroplast thylakoid membrane. Functionally, component of the cytochrome b6-f complex, which mediates electron transfer between photosystem II (PSII) and photosystem I (PSI), cyclic electron flow around PSI, and state transitions. The sequence is that of Cytochrome f from Acorus calamus (Sweet flag).